We begin with the raw amino-acid sequence, 347 residues long: Bombesin receptor-activated protein C6orf89 homolog (347 aa).

Residues 1 to 58 (MDLAANEISIYDKLSETVDLVRQTGHQCGMSEKAIEKFIRQLLEKNEPQRPPPQYPLL) lie on the Cytoplasmic side of the membrane. The helical transmembrane segment at 59 to 79 (IVVYKVLATLGLILLTAYFVI) threads the bilayer. Residues 80 to 347 (QPFSPLAPEP…ICDGTAFSEL (268 aa)) are Extracellular-facing.

In terms of assembly, homodimer. Interacts with BRS3. Interacts (via N-terminus) with SIN3B. Post-translationally, glycosylated.

The protein resides in the golgi apparatus membrane. Its subcellular location is the cytoplasm. Its function is as follows. Exhibits histone deacetylase (HDAC) enhancer properties. May play a role in cell cycle progression and wound repair of bronchial epithelial cells. In Pongo abelii (Sumatran orangutan), this protein is Bombesin receptor-activated protein C6orf89 homolog.